A 211-amino-acid chain; its full sequence is Molybdenum cofactor guanylyltransferase (211 aa).

GTP-binding positions include 12–14 (LAG), K25, N53, D71, and D101. Mg(2+) is bound at residue D101.

The protein belongs to the MobA family. As to quaternary structure, monomer. Mg(2+) serves as cofactor.

It localises to the cytoplasm. It carries out the reaction Mo-molybdopterin + GTP + H(+) = Mo-molybdopterin guanine dinucleotide + diphosphate. In terms of biological role, transfers a GMP moiety from GTP to Mo-molybdopterin (Mo-MPT) cofactor (Moco or molybdenum cofactor) to form Mo-molybdopterin guanine dinucleotide (Mo-MGD) cofactor. This Acidovorax sp. (strain JS42) protein is Molybdenum cofactor guanylyltransferase.